The primary structure comprises 916 residues: Protein translocase subunit SecA (916 aa).

ATP-binding positions include Gln-87, 105–109, and Asp-507; that span reads GEGKT. Zn(2+) is bound by residues Cys-900, Cys-902, Cys-911, and His-912.

This sequence belongs to the SecA family. As to quaternary structure, monomer and homodimer. Part of the essential Sec protein translocation apparatus which comprises SecA, SecYEG and auxiliary proteins SecDF-YajC and YidC. Zn(2+) is required as a cofactor.

It localises to the cell inner membrane. Its subcellular location is the cytoplasm. The enzyme catalyses ATP + H2O + cellular proteinSide 1 = ADP + phosphate + cellular proteinSide 2.. Functionally, part of the Sec protein translocase complex. Interacts with the SecYEG preprotein conducting channel. Has a central role in coupling the hydrolysis of ATP to the transfer of proteins into and across the cell membrane, serving both as a receptor for the preprotein-SecB complex and as an ATP-driven molecular motor driving the stepwise translocation of polypeptide chains across the membrane. The chain is Protein translocase subunit SecA from Neisseria meningitidis serogroup A / serotype 4A (strain DSM 15465 / Z2491).